Reading from the N-terminus, the 187-residue chain is Intraflagellar transport protein 22 homolog (187 aa).

Residues 10-17 (GPSECGKT), 65-69 (DCAGD), and 125-128 (HKPG) each bind GTP.

The protein belongs to the small GTPase superfamily. Rab family.

The sequence is that of Intraflagellar transport protein 22 homolog (ift22) from Danio rerio (Zebrafish).